A 168-amino-acid chain; its full sequence is Large ribosomal subunit protein uL24 (168 aa).

A disordered region spans residues 112 to 168 (LEGKDPRKQPKEAPKAAEKPAKEEPKKETPKAEEKPAKEEPKETKVEKKSEEKEDEN).

Belongs to the universal ribosomal protein uL24 family. As to quaternary structure, part of the 50S ribosomal subunit.

One of two assembly initiator proteins, it binds directly to the 5'-end of the 23S rRNA, where it nucleates assembly of the 50S subunit. Its function is as follows. Located at the polypeptide exit tunnel on the outside of the subunit. The chain is Large ribosomal subunit protein uL24 from Nitrosopumilus maritimus (strain SCM1).